The following is a 307-amino-acid chain: Homoserine O-acetyltransferase (307 aa).

Residue Cys142 is the Acyl-thioester intermediate of the active site. Substrate contacts are provided by Lys163 and Ser192. His235 functions as the Proton acceptor in the catalytic mechanism. The active site involves Glu237. Residue Arg249 coordinates substrate.

This sequence belongs to the MetA family.

Its subcellular location is the cytoplasm. It carries out the reaction L-homoserine + acetyl-CoA = O-acetyl-L-homoserine + CoA. It participates in amino-acid biosynthesis; L-methionine biosynthesis via de novo pathway; O-acetyl-L-homoserine from L-homoserine: step 1/1. In terms of biological role, transfers an acetyl group from acetyl-CoA to L-homoserine, forming acetyl-L-homoserine. The protein is Homoserine O-acetyltransferase of Desulfitobacterium hafniense (strain Y51).